Here is a 515-residue protein sequence, read N- to C-terminus: Microtubule-associated protein 70-4 (515 aa).

2 coiled-coil regions span residues 26–106 (VVDE…ALSA) and 136–351 (LESD…NTSA). Residues 208–410 (LLEKSNRQQV…KQPGSETEAA (203 aa)) form a required for targeting to microtubules region. Residues 340–515 (DDMRNESSNT…VKSTKDSCEI (176 aa)) are disordered. Residues 345 to 362 (ESSNTSASNKDNATSKQA) are compositionally biased toward polar residues. Residues 364 to 374 (PKRSSSQPRRP) show a composition bias toward low complexity. 3 stretches are compositionally biased toward basic and acidic residues: residues 409 to 425 (AAEK…DSPR), 450 to 461 (KVADDAGKENKE), and 484 to 515 (SEHE…SCEI).

The protein belongs to the MAP70 family.

The protein localises to the cytoplasm. It localises to the cytoskeleton. In terms of biological role, plant-specific protein that interact with microtubules. The protein is Microtubule-associated protein 70-4 (MAP70.4) of Oryza sativa subsp. japonica (Rice).